We begin with the raw amino-acid sequence, 293 residues long: Nitrogenase iron protein (293 aa).

10–17 contributes to the ATP binding site; it reads GKGGIGKS. Cys-98 contacts [4Fe-4S] cluster. Arg-101 bears the ADP-ribosylarginine; by dinitrogenase reductase ADP-ribosyltransferase mark. A [4Fe-4S] cluster-binding site is contributed by Cys-133.

The protein belongs to the NifH/BchL/ChlL family. In terms of assembly, homodimer. [4Fe-4S] cluster is required as a cofactor. The reversible ADP-ribosylation of Arg-101 inactivates the nitrogenase reductase and regulates nitrogenase activity.

The enzyme catalyses N2 + 8 reduced [2Fe-2S]-[ferredoxin] + 16 ATP + 16 H2O = H2 + 8 oxidized [2Fe-2S]-[ferredoxin] + 2 NH4(+) + 16 ADP + 16 phosphate + 6 H(+). Functionally, the key enzymatic reactions in nitrogen fixation are catalyzed by the nitrogenase complex, which has 2 components: the iron protein and the molybdenum-iron protein. In Stutzerimonas stutzeri (strain A1501) (Pseudomonas stutzeri), this protein is Nitrogenase iron protein.